The sequence spans 59 residues: MAVPKRKTSPSKRGMRRSADALKAPTYIEDKNSGELRRPHHIDLKTGMYRGRSVLPPKD.

A compositionally biased stretch (basic residues) spans 1 to 16 (MAVPKRKTSPSKRGMR). Positions 1–59 (MAVPKRKTSPSKRGMRRSADALKAPTYIEDKNSGELRRPHHIDLKTGMYRGRSVLPPKD) are disordered. The segment covering 28-44 (IEDKNSGELRRPHHIDL) has biased composition (basic and acidic residues).

It belongs to the bacterial ribosomal protein bL32 family.

The sequence is that of Large ribosomal subunit protein bL32 from Bartonella quintana (strain Toulouse) (Rochalimaea quintana).